A 351-amino-acid chain; its full sequence is F-box protein At1g70590 (351 aa).

Residues 1 to 60 (MKQRTWPCRSEGSRFSSLSFLKPHDKDKRSRISSINKATAKSTTSSRSSSSSSSSRPPSN) are disordered. The span at 32–41 (ISSINKATAK) shows a compositional bias: polar residues. Residues 42–59 (STTSSRSSSSSSSSRPPS) are compositionally biased toward low complexity. The 50-residue stretch at 62–111 (FGDFSMLPYDILMKIAAPFSHPNLQAASLVCKSWRDALKPLRESMLLIRW) folds into the F-box domain. Residues 105 to 141 (SMLLIRWGKKYKHGRGGVRANLDKALDSFLKGAMRGS) form a Sel1-like repeat. The stretch at 142–175 (TLAMVDAGLVYWERGEKEKAVNLYRRASELGDAV) is one TPR repeat.

The protein is F-box protein At1g70590 of Arabidopsis thaliana (Mouse-ear cress).